Reading from the N-terminus, the 271-residue chain is Bifunctional protein FolD (271 aa).

Residues 154–156 (GRS), serine 181, and isoleucine 222 each bind NADP(+).

It belongs to the tetrahydrofolate dehydrogenase/cyclohydrolase family. As to quaternary structure, homodimer.

It catalyses the reaction (6R)-5,10-methylene-5,6,7,8-tetrahydrofolate + NADP(+) = (6R)-5,10-methenyltetrahydrofolate + NADPH. The enzyme catalyses (6R)-5,10-methenyltetrahydrofolate + H2O = (6R)-10-formyltetrahydrofolate + H(+). The protein operates within one-carbon metabolism; tetrahydrofolate interconversion. Catalyzes the oxidation of 5,10-methylenetetrahydrofolate to 5,10-methenyltetrahydrofolate and then the hydrolysis of 5,10-methenyltetrahydrofolate to 10-formyltetrahydrofolate. In Thermotoga petrophila (strain ATCC BAA-488 / DSM 13995 / JCM 10881 / RKU-1), this protein is Bifunctional protein FolD.